The following is a 244-amino-acid chain: Aspartate/glutamate leucyltransferase (244 aa).

This sequence belongs to the R-transferase family. Bpt subfamily.

Its subcellular location is the cytoplasm. It carries out the reaction N-terminal L-glutamyl-[protein] + L-leucyl-tRNA(Leu) = N-terminal L-leucyl-L-glutamyl-[protein] + tRNA(Leu) + H(+). It catalyses the reaction N-terminal L-aspartyl-[protein] + L-leucyl-tRNA(Leu) = N-terminal L-leucyl-L-aspartyl-[protein] + tRNA(Leu) + H(+). Functions in the N-end rule pathway of protein degradation where it conjugates Leu from its aminoacyl-tRNA to the N-termini of proteins containing an N-terminal aspartate or glutamate. The protein is Aspartate/glutamate leucyltransferase of Paramagnetospirillum magneticum (strain ATCC 700264 / AMB-1) (Magnetospirillum magneticum).